The sequence spans 349 residues: NAC domain-containing protein JA2 (349 aa).

One can recognise an NAC domain in the interval 14–163 (LPPGFRFYPT…EWVLCRIYKK (150 aa)). Residues 111–169 (VGIKKALVFYVGKAPKGSKTNWIMHEYRLFESSRKNNGSSKLDEWVLCRIYKKNSSGPK) mediate DNA binding. Positions 169–194 (KPLMSGLHSSNEYSHGSSTSSSSQFD) are disordered. Positions 177 to 191 (SSNEYSHGSSTSSSS) are enriched in low complexity.

Expressed in guard cells of the epidermis.

The protein resides in the nucleus. In terms of biological role, transcription factor involved in abscisic acid-mediated stomatal closure. Regulates the expression of NCED1, a gene involved in the biosynthesis of abscisic acid (ABA). Required for the stomatal closure induced by the bacterial pathogen Pseudomonas syringae pv tomato DC3000, but not for stomatal reopening. The chain is NAC domain-containing protein JA2 from Solanum lycopersicum (Tomato).